The following is a 225-amino-acid chain: MVQSCSAYGCKNRYDKDRPISFHKFPLKRPLLCKKWEAAVRRADFKPTKYSSICSDHFTADCFKRECNNKLLKDNAVPTVFALAEIKKKMGKAVKKEQLPAELEPVPAVPEVDPAIGLLLPPLYTPSHIAVICDHNYTVEDTVHQRRRIQQLEEQVDKLRKKLKIANQKCRRQERSLEKLEKEVSEYREAKGSGYVIFPGNYYEVLNENEYKELTPEITYKEIIL.

Residues 5-57 (CSAYGCKNRYDKDRPISFHKFPLKRPLLCKKWEAAVRRADFKPTKYSSICSDH) form a THAP-type zinc finger. The stretch at 139-194 (VEDTVHQRRRIQQLEEQVDKLRKKLKIANQKCRRQERSLEKLEKEVSEYREAKGSG) forms a coiled coil.

This sequence belongs to the THAP1 family.

It is found in the nucleus. It localises to the nucleoplasm. Its function is as follows. DNA-binding transcription regulator that regulates endothelial cell proliferation and G1/S cell-cycle progression. Specifically binds the 5'-[AT]NTNN[GT]GGCA[AGT]-3' core DNA sequence and acts by modulating expression of pRB-E2F cell-cycle target genes. The sequence is that of THAP domain-containing protein 1 B (thap1-b) from Xenopus laevis (African clawed frog).